The sequence spans 394 residues: Elongation factor Tu, mitochondrial (394 aa).

The 195-residue stretch at 10 to 204 (KPHCNIGTIG…AVDNYIPQPE (195 aa)) folds into the tr-type G domain. The interval 19 to 26 (GHVDHGKT) is G1. 19–26 (GHVDHGKT) serves as a coordination point for GTP. The segment at 60–64 (GITIS) is G2. The segment at 81–84 (DCPG) is G3. Residues 81–85 (DCPGH) and 136–139 (NKVD) contribute to the GTP site. The segment at 136–139 (NKVD) is G4. The tract at residues 174-176 (SAL) is G5.

This sequence belongs to the TRAFAC class translation factor GTPase superfamily. Classic translation factor GTPase family. EF-Tu/EF-1A subfamily.

Its subcellular location is the mitochondrion. Its function is as follows. This protein promotes the GTP-dependent binding of aminoacyl-tRNA to the A-site of ribosomes during protein biosynthesis. This Reclinomonas americana protein is Elongation factor Tu, mitochondrial (TUFA).